A 445-amino-acid polypeptide reads, in one-letter code: Histone acetyltransferase of the MYST family 1 (445 aa).

In terms of domain architecture, Tudor-knot spans 60 to 118 (LEVGTRVMCQWRDGKYHPVKVIERRKNYNGGHNDYEYYVHYTEFNRRLDEWIKLEQLDL). Residues 169–440 (TKVKNIATIE…VDVSKMIWTP (272 aa)) enclose the MYST-type HAT domain. The C2HC MYST-type zinc finger occupies 202–227 (LFFCEFCLSFMKRKEQLQRHMRKCDL). Lys-269 bears the N6-acetyllysine; by autocatalysis mark. Acetyl-CoA contacts are provided by residues 312-314 (ILT) and 319-325 (QRKGYGK). Glu-345 (proton donor/acceptor) is an active-site residue. Residue Ser-349 participates in acetyl-CoA binding.

It belongs to the MYST (SAS/MOZ) family. Interacts with MRG1 and MRG2. Component of the NuA4 histone acetyltransferase complex. Autoacetylation at Lys-269 is required for proper function. Expressed in cotyledons, leaves, stems, roots and, at higher levels in developing flowers, particularly in the anthers and gynoecia. Constitutively expressed in all tissues, predominantly in shoot apical meristem.

The protein localises to the nucleus. The catalysed reaction is L-lysyl-[protein] + acetyl-CoA = N(6)-acetyl-L-lysyl-[protein] + CoA + H(+). In terms of biological role, histone acetyltransferase which may be involved in transcriptional activation. Acetylates 'Lys-5' of histone H4 (H4K5ac). Essential for gametophyte development. Involved in DNA repair after UV-B exposure. Negative regulator of flowering controlling the H4K5ac levels in the FLC chromatin. The sequence is that of Histone acetyltransferase of the MYST family 1 from Arabidopsis thaliana (Mouse-ear cress).